The chain runs to 496 residues: MIPVVALVGRPNVGKSTLFNRLTRSRDALVADFPGLTRDRKYGQAKVGEHDFIVIDTGGIDGSEEGVETKMAEQSLAAIREADVVLFMVDGRAGLTPSDEAIAAHLRKIEKATMLVVNKVDGIDADAASADFWQLGVDEMYQIAAAHGRGVTALIERALDPFFDNLLSANNEGEIEDLTDMEDEDAEQQEYSEEDAEESLKRLQDQPIKLAIIGRPNVGKSTLTNRILGEERVVVYDMPGTTRDSIYIPMERDGREYVLIDTAGVRRRGKVHETVEKFSVVKTLKAVEDANVVLLVIDARENISDQDLSLLGFALNAGRSIVLAVNKWDGLDNEVKENVKKELDRRLGFVDFARIHFISALHGTGVGHLFESVQEAYRSATTRVGTSVLTRIMKMATEDHQPPMVRGRRVKLKYAHAGGYNPPIVVIHGNQVRELPDSYKRYLMNYFRKSLDIMGTPIRIQFQNSDNPFENRVNKMTLSQERARKRMMSAVKNRKK.

2 EngA-type G domains span residues 3–166 (PVVA…FDNL) and 208–381 (IKLA…RSAT). GTP is bound by residues 9–16 (GRPNVGKS), 56–60 (DTGGI), 118–121 (NKVD), 214–221 (GRPNVGKS), 261–265 (DTAGV), and 326–329 (NKWD). The 85-residue stretch at 382–466 (TRVGTSVLTR…PIRIQFQNSD (85 aa)) folds into the KH-like domain.

The protein belongs to the TRAFAC class TrmE-Era-EngA-EngB-Septin-like GTPase superfamily. EngA (Der) GTPase family. In terms of assembly, associates with the 50S ribosomal subunit.

Its function is as follows. GTPase that plays an essential role in the late steps of ribosome biogenesis. The polypeptide is GTPase Der (Vibrio vulnificus (strain CMCP6)).